The following is a 321-amino-acid chain: Lipoyl synthase (321 aa).

Cysteine 68, cysteine 73, cysteine 79, cysteine 94, cysteine 98, cysteine 101, and serine 308 together coordinate [4Fe-4S] cluster. The region spanning 80 to 297 (FNHGTATFMI…RVFAEEIGFT (218 aa)) is the Radical SAM core domain.

It belongs to the radical SAM superfamily. Lipoyl synthase family. [4Fe-4S] cluster serves as cofactor.

It localises to the cytoplasm. It catalyses the reaction [[Fe-S] cluster scaffold protein carrying a second [4Fe-4S](2+) cluster] + N(6)-octanoyl-L-lysyl-[protein] + 2 oxidized [2Fe-2S]-[ferredoxin] + 2 S-adenosyl-L-methionine + 4 H(+) = [[Fe-S] cluster scaffold protein] + N(6)-[(R)-dihydrolipoyl]-L-lysyl-[protein] + 4 Fe(3+) + 2 hydrogen sulfide + 2 5'-deoxyadenosine + 2 L-methionine + 2 reduced [2Fe-2S]-[ferredoxin]. It participates in protein modification; protein lipoylation via endogenous pathway; protein N(6)-(lipoyl)lysine from octanoyl-[acyl-carrier-protein]: step 2/2. Functionally, catalyzes the radical-mediated insertion of two sulfur atoms into the C-6 and C-8 positions of the octanoyl moiety bound to the lipoyl domains of lipoate-dependent enzymes, thereby converting the octanoylated domains into lipoylated derivatives. The chain is Lipoyl synthase from Shewanella woodyi (strain ATCC 51908 / MS32).